The sequence spans 56 residues: Large ribosomal subunit protein bL33 (56 aa).

The span at Met1–Leu12 shows a compositional bias: basic and acidic residues. Positions Met1–Thr30 are disordered. The segment covering Thr15–Thr25 has biased composition (polar residues).

This sequence belongs to the bacterial ribosomal protein bL33 family.

The chain is Large ribosomal subunit protein bL33 from Ralstonia nicotianae (strain ATCC BAA-1114 / GMI1000) (Ralstonia solanacearum).